Here is a 609-residue protein sequence, read N- to C-terminus: Hemagglutinin glycoprotein (609 aa).

At 1–34 (MSSPRDRVNAFYKDNLQFKNTRVVLNKEQLLIER) the chain is on the intravirion side. Residues 35–58 (PYMLLAVLFVMFLSLVGLLAIAGI) traverse the membrane as a helical; Signal-anchor for type II membrane protein segment. Residues 59–609 (RLHRAAVNTA…VGIEITCNSR (551 aa)) lie on the Virion surface side of the membrane. N-linked (GlcNAc...) asparagine; by host glycosylation is found at Asn-168, Asn-200, Asn-215, and Asn-395.

It belongs to the paramyxoviruses hemagglutinin-neuraminidase family. Non-sialidase subfamily.

The protein localises to the virion membrane. Its subcellular location is the host membrane. In terms of biological role, attaches the virus to cell receptors and thereby initiating infection. Binding of H protein to the receptor induces a conformational change that allows the F protein to trigger virion/cell membranes fusion. Down-regulates human MCP/CD46 cell surface expression. This chain is Hemagglutinin glycoprotein (H), found in Rinderpest virus (strain L) (RDV).